A 421-amino-acid chain; its full sequence is MGSSSGQKPRRLEDLVDKLASGSLSHSRLEKELGNANEAALVRRLYLERLTGASLSSVASTILDFQELYGRNIENPIGAVQVPVGVAGPLRINGDYARGDFYIPLATTEGALVASVNRGAKAITLSGGARAKVIKDGMTRAPLLWTPSVYEAHRLAMWVEDRIEDLRSVVAGVTRHGRLQHIYPYIIGNLVWLRLSFSTGDAMGMNMVTISSDRICRYIEENYDGDAKCIALSGNMCTDKKPAAINKILGRGKYVVAEAVIKGEVVKNVLKTTPQNINLVNVTKNLLGSAAAGSHSFNAHFANIIAAIFIATGQDAAQVVESSMGYTWTEVRGEDLYISVTLPSLEVGTVGGGTRLPTQRELLALLGVAGGGNPPGSNALKLAEIIASAVLAGELNLLSAIAAGQLARAHELLGRGGLKIS.

Catalysis depends on charge relay system residues E109, K240, and D315. Residue H410 is the Proton donor of the active site.

Belongs to the HMG-CoA reductase family.

The enzyme catalyses (R)-mevalonate + 2 NADP(+) + CoA = (3S)-3-hydroxy-3-methylglutaryl-CoA + 2 NADPH + 2 H(+). The protein operates within metabolic intermediate biosynthesis; (R)-mevalonate biosynthesis; (R)-mevalonate from acetyl-CoA: step 3/3. In terms of biological role, converts HMG-CoA to mevalonate. In Aeropyrum pernix (strain ATCC 700893 / DSM 11879 / JCM 9820 / NBRC 100138 / K1), this protein is 3-hydroxy-3-methylglutaryl-coenzyme A reductase (hmgA).